Here is a 1895-residue protein sequence, read N- to C-terminus: 1,3-beta-glucan synthase component GSC2 (1895 aa).

Polar residues-rich tracts occupy residues Met1 to Gly16 and Pro25 to Ser34. Disordered regions lie at residues Met1–Asn143 and Ala269–Leu292. Topologically, residues Met1–Arg473 are extracellular. Positions Gln65–Pro78 are enriched in low complexity. Polar residues-rich tracts occupy residues Tyr79–Ser107 and Thr115–Tyr141. The span at Ala269 to Lys278 shows a compositional bias: basic residues. A Glycyl lysine isopeptide (Lys-Gly) (interchain with G-Cter in ubiquitin) cross-link involves residue Lys278. Phosphothreonine occurs at positions 288 and 291. Lys405 is covalently cross-linked (Glycyl lysine isopeptide (Lys-Gly) (interchain with G-Cter in ubiquitin)). The helical transmembrane segment at Ile474–Tyr494 threads the bilayer. Residues Thr495 to Lys511 lie on the Cytoplasmic side of the membrane. The helical transmembrane segment at Trp512 to Cys532 threads the bilayer. Over Glu533–Arg550 the chain is Extracellular. A helical transmembrane segment spans residues Phe551 to Tyr571. The Cytoplasmic portion of the chain corresponds to Asp572–His582. The chain crosses the membrane as a helical span at residues Val583–Pro603. At Leu604–Leu1579 the chain is on the extracellular side. Residues Lys929, Lys934, Lys1558, and Lys1566 each participate in a glycyl lysine isopeptide (Lys-Gly) (interchain with G-Cter in ubiquitin) cross-link. The helical transmembrane segment at Ile1580–Phe1600 threads the bilayer. Over Ile1601 to Arg1620 the chain is Cytoplasmic. The helical transmembrane segment at Ile1621 to Gly1641 threads the bilayer. The Extracellular portion of the chain corresponds to Leu1642–Glu1758. A helical transmembrane segment spans residues Phe1759 to Ile1779. Residues Pro1780 to Ser1821 lie on the Cytoplasmic side of the membrane. The helical transmembrane segment at Leu1822–Ala1842 threads the bilayer. At His1843–Lys1895 the chain is on the extracellular side.

The protein belongs to the glycosyltransferase 48 family. In terms of assembly, component of the 1,3-beta-glucan synthase (GS) complex, composed of two alternate catalytic subunits FKS1 or GSC2, and a regulatory subunit RHO1. Interacts with SMK1.

Its subcellular location is the membrane. The catalysed reaction is [(1-&gt;3)-beta-D-glucosyl](n) + UDP-alpha-D-glucose = [(1-&gt;3)-beta-D-glucosyl](n+1) + UDP + H(+). Functionally, alternate catalytic subunit of the 1,3-beta-glucan synthase (GS) complex. Synthesizes 1,3-beta-glucan, a major structural component of the yeast cell wall. Required for spore wall assembly. Negative regulation of activity by SMK1 is important for spore wall deposition. Activity is positively regulated by RHO1. The polypeptide is 1,3-beta-glucan synthase component GSC2 (Saccharomyces cerevisiae (strain ATCC 204508 / S288c) (Baker's yeast)).